Consider the following 247-residue polypeptide: uncharacterized protein (247 aa).

The next 3 membrane-spanning stretches (helical) occupy residues 108-128 (WYINFIPMFVYGCLDEAFLII), 136-156 (IFSVYNGMSMLASAAVANIIC), and 194-214 (GAKLSGLWMGLTLGMLPLFFI).

It is found in the membrane. This is an uncharacterized protein from Caenorhabditis elegans.